Here is a 375-residue protein sequence, read N- to C-terminus: Filamin-binding LIM protein 1 (375 aa).

The filamin-binding stretch occupies residues 1 to 70 (MASKPEKRVA…SPWTPPGRAA (70 aa)). Disordered stretches follow at residues 43–119 (WEAP…PSEE) and 137–176 (HLSPPLPPPPPQAPAERPSVQPSPLRPMEEELPPPPAERV). Pro residues-rich tracts occupy residues 104–114 (FPPPPPPPPVL) and 140–149 (PPLPPPPPQA). Over residues 150-159 (PAERPSVQPS) the composition is skewed to low complexity. 3 consecutive LIM zinc-binding domains span residues 183 to 244 (DICA…TLER), 245 to 302 (CGKC…RKFA), and 303 to 372 (PVCS…RSAA). Positions 278 to 375 (IGDESFALGS…HVKRSAAGCC (98 aa)) are FERMT2-binding.

As to quaternary structure, interacts with FERMT2, FLNA, FLNB and FLNC. Interacts with NKX2-5.

It is found in the cell junction. It localises to the focal adhesion. The protein localises to the cytoplasm. Its subcellular location is the cytoskeleton. The protein resides in the stress fiber. Functionally, serves as an anchoring site for cell-ECM adhesion proteins and filamin-containing actin filaments. Is implicated in cell shape modulation (spreading) and motility. May participate in the regulation of filamin-mediated cross-linking and stabilization of actin filaments. May also regulate the assembly of filamin-containing signaling complexes that control actin assembly. Promotes dissociation of FLNA from ITGB3 and ITGB7. Promotes activation of integrins and regulates integrin-mediated cell-cell adhesion. This is Filamin-binding LIM protein 1 (FBLIM1) from Pongo abelii (Sumatran orangutan).